A 449-amino-acid polypeptide reads, in one-letter code: Chromosomal replication initiator protein DnaA (449 aa).

The tract at residues 1 to 71 (MPSSLWKHCL…LLSHYSSGRI (71 aa)) is domain I, interacts with DnaA modulators. Residues 71 to 112 (IEKALLEVGSCSLQPQPHIQAVELTSKSARSSSRVVDRIPES) form a domain II region. The interval 113–329 (RLNKNYTFDS…GALRRVIAYS (217 aa)) is domain III, AAA+ region. Residues glycine 157, glycine 159, lysine 160, and threonine 161 each contribute to the ATP site. The tract at residues 330–449 (RFTHRPITME…YHNLLKKLST (120 aa)) is domain IV, binds dsDNA.

The protein belongs to the DnaA family. As to quaternary structure, oligomerizes as a right-handed, spiral filament on DNA at oriC.

Its subcellular location is the cytoplasm. Functionally, plays an essential role in the initiation and regulation of chromosomal replication. ATP-DnaA binds to the origin of replication (oriC) to initiate formation of the DNA replication initiation complex once per cell cycle. Binds the DnaA box (a 9 base pair repeat at the origin) and separates the double-stranded (ds)DNA. Forms a right-handed helical filament on oriC DNA; dsDNA binds to the exterior of the filament while single-stranded (ss)DNA is stabiized in the filament's interior. The ATP-DnaA-oriC complex binds and stabilizes one strand of the AT-rich DNA unwinding element (DUE), permitting loading of DNA polymerase. After initiation quickly degrades to an ADP-DnaA complex that is not apt for DNA replication. Binds acidic phospholipids. This is Chromosomal replication initiator protein DnaA from Nitrosococcus oceani (strain ATCC 19707 / BCRC 17464 / JCM 30415 / NCIMB 11848 / C-107).